We begin with the raw amino-acid sequence, 225 residues long: Insulin-induced gene 2 protein (225 aa).

Over 1–28 (MAEGETESPGPKKCGPYISSVTSQSVNL) the chain is Cytoplasmic. Residues 29 to 51 (MIRGVVLFFIGVFLALVLNLLQI) traverse the membrane as a helical segment. The Lumenal segment spans residues 52–70 (QRNVTLFPPDVIASIFSSA). The helical transmembrane segment at 71 to 88 (WWVPPCCGTASAVIGLLY) threads the bilayer. Over 89 to 103 (PCIDRHLGEPHKFKR) the chain is Cytoplasmic. A helical membrane pass occupies residues 104–126 (EWSSVMRCVAVFVGINHASAKVD). Over 127–129 (FDN) the chain is Lumenal. Residues 130-148 (NIQLSLTLAALSIGLWWTF) form a helical membrane-spanning segment. The Cytoplasmic segment spans residues 149–153 (DRSRS). A Phosphoserine modification is found at serine 151. A helical membrane pass occupies residues 154-175 (GFGLGVGIAFLATLVTQLLVYN). The Lumenal portion of the chain corresponds to 176–189 (GVYQYTSPDFLYVR). The chain crosses the membrane as a helical span at residues 190-207 (SWLPCIFFAGGITMGNIG). Over 208–225 (RQLAMYECKVIAEKSHQE) the chain is Cytoplasmic. A Cysteine sulfenic acid (-SOH); alternate modification is found at cysteine 215. Cysteine 215 is covalently cross-linked (Glycyl cysteine thioester (Cys-Gly) (interchain with G-Cter in ubiquitin); alternate). The KxHxx signature appears at 219 to 225 (AEKSHQE).

This sequence belongs to the INSIG family. In terms of assembly, interacts with SCAP; interaction is direct and only takes place in the presence of sterols; it prevents interaction between SCAP and the coat protein complex II (COPII). Associates with the SCAP-SREBP complex (composed of SCAP and SREBF1/SREBP1 or SREBF2/SREBP2); association is mediated via its interaction with SCAP and only takes place in the presence of sterols. Interacts with RNF139. Interacts with RNF145. In terms of processing, phosphorylation at Ser-151 by PCK1 reduces binding to oxysterol, disrupting the interaction between INSIG2 and SCAP, thereby promoting nuclear translocation of SREBP proteins (SREBF1/SREBP1 or SREBF2/SREBP2) and subsequent transcription of downstream lipogenesis-related genes. Polyubiquitinated by AMFR/gp78 at Cys-215 in some tissues such as adipose tissues, undifferentiated myoblasts and liver, leading to its degradation. In differentiated myotubes, Cys-215 oxidation prevents ubiquitination at the same site, resulting in protein stabilization. Post-translationally, oxidized at Cys-215 in differentiated myotubes, preventing ubiquitination at the same site, and resulting in protein stabilization.

Its subcellular location is the endoplasmic reticulum membrane. Its function is as follows. Oxysterol-binding protein that mediates feedback control of cholesterol synthesis by controlling both endoplasmic reticulum to Golgi transport of SCAP and degradation of HMGCR. Acts as a negative regulator of cholesterol biosynthesis by mediating the retention of the SCAP-SREBP complex in the endoplasmic reticulum, thereby blocking the processing of sterol regulatory element-binding proteins (SREBPs) SREBF1/SREBP1 and SREBF2/SREBP2. Binds oxysterol, including 22-hydroxycholesterol, 24-hydroxycholesterol, 25-hydroxycholesterol and 27-hydroxycholesterol, regulating interaction with SCAP and retention of the SCAP-SREBP complex in the endoplasmic reticulum. In presence of oxysterol, interacts with SCAP, retaining the SCAP-SREBP complex in the endoplasmic reticulum, thereby preventing SCAP from escorting SREBF1/SREBP1 and SREBF2/SREBP2 to the Golgi. Sterol deprivation or phosphorylation by PCK1 reduce oxysterol-binding, disrupting the interaction between INSIG2 and SCAP, thereby promoting Golgi transport of the SCAP-SREBP complex, followed by processing and nuclear translocation of SREBF1/SREBP1 and SREBF2/SREBP2. Also regulates cholesterol synthesis by regulating degradation of HMGCR: initiates the sterol-mediated ubiquitin-mediated endoplasmic reticulum-associated degradation (ERAD) of HMGCR via recruitment of the reductase to the ubiquitin ligase RNF139. In Papio anubis (Olive baboon), this protein is Insulin-induced gene 2 protein.